A 186-amino-acid polypeptide reads, in one-letter code: ATP synthase subunit b (186 aa).

Residues 28-48 form a helical membrane-spanning segment; it reads IVWSIIPFAVILFVFWKFVLP.

This sequence belongs to the ATPase B chain family. F-type ATPases have 2 components, F(1) - the catalytic core - and F(0) - the membrane proton channel. F(1) has five subunits: alpha(3), beta(3), gamma(1), delta(1), epsilon(1). F(0) has three main subunits: a(1), b(2) and c(10-14). The alpha and beta chains form an alternating ring which encloses part of the gamma chain. F(1) is attached to F(0) by a central stalk formed by the gamma and epsilon chains, while a peripheral stalk is formed by the delta and b chains.

The protein localises to the cell membrane. Functionally, f(1)F(0) ATP synthase produces ATP from ADP in the presence of a proton or sodium gradient. F-type ATPases consist of two structural domains, F(1) containing the extramembraneous catalytic core and F(0) containing the membrane proton channel, linked together by a central stalk and a peripheral stalk. During catalysis, ATP synthesis in the catalytic domain of F(1) is coupled via a rotary mechanism of the central stalk subunits to proton translocation. Component of the F(0) channel, it forms part of the peripheral stalk, linking F(1) to F(0). In Corynebacterium jeikeium (strain K411), this protein is ATP synthase subunit b.